A 356-amino-acid polypeptide reads, in one-letter code: Alternative oxidase, mitochondrial (356 aa).

The helical transmembrane segment at 152 to 172 threads the bilayer; that stretch reads VIRFIFLETVAGVPGMVGGML. Positions 159, 198, and 201 each coordinate Fe cation. The helical transmembrane segment at 217–237 threads the bilayer; the sequence is LMVLGAQGVFFNGFFISYLIS. The Fe cation site is built by Glu249, Glu304, and His307. The disordered stretch occupies residues 330–356; that stretch reads YDNPEAPHPTKSAEIVKPTGWERDEVI.

It belongs to the alternative oxidase family. Fe cation is required as a cofactor.

The protein localises to the mitochondrion inner membrane. Its function is as follows. Catalyzes cyanide-resistant oxygen consumption. May increase respiration when the cytochrome respiratory pathway is restricted, or in response to low temperatures. This Ajellomyces capsulatus (Darling's disease fungus) protein is Alternative oxidase, mitochondrial (AOX1).